We begin with the raw amino-acid sequence, 624 residues long: DNA mismatch repair protein MutL (624 aa).

Positions 355–377 (EESAPERKLPEKTPEPSYSPMKL) are disordered. Positions 358–368 (APERKLPEKTP) are enriched in basic and acidic residues.

This sequence belongs to the DNA mismatch repair MutL/HexB family.

In terms of biological role, this protein is involved in the repair of mismatches in DNA. It is required for dam-dependent methyl-directed DNA mismatch repair. May act as a 'molecular matchmaker', a protein that promotes the formation of a stable complex between two or more DNA-binding proteins in an ATP-dependent manner without itself being part of a final effector complex. This chain is DNA mismatch repair protein MutL, found in Bacillus velezensis (strain DSM 23117 / BGSC 10A6 / LMG 26770 / FZB42) (Bacillus amyloliquefaciens subsp. plantarum).